The sequence spans 215 residues: Adenylate kinase (215 aa).

An ATP-binding site is contributed by G10–T15. Residues S30–V59 are NMP. Residues T31, R36, G57–V59, G85–R88, and Q92 each bind AMP. The tract at residues G122–D159 is LID. ATP-binding positions include R123 and V132–Y133. Positions 156 and 167 each coordinate AMP. G201 lines the ATP pocket.

This sequence belongs to the adenylate kinase family. As to quaternary structure, monomer.

The protein localises to the cytoplasm. The enzyme catalyses AMP + ATP = 2 ADP. It participates in purine metabolism; AMP biosynthesis via salvage pathway; AMP from ADP: step 1/1. In terms of biological role, catalyzes the reversible transfer of the terminal phosphate group between ATP and AMP. Plays an important role in cellular energy homeostasis and in adenine nucleotide metabolism. The chain is Adenylate kinase from Pseudomonas fluorescens (strain SBW25).